A 390-amino-acid chain; its full sequence is Chorismate synthase 2 (390 aa).

NADP(+)-binding residues include Arg39 and Arg45. FMN-binding positions include 132–134 (RSS), 253–254 (NA), Gly298, 313–317 (KPIPT), and Arg339.

It belongs to the chorismate synthase family. In terms of assembly, homotetramer. Requires FMNH2 as cofactor.

It catalyses the reaction 5-O-(1-carboxyvinyl)-3-phosphoshikimate = chorismate + phosphate. Its pathway is metabolic intermediate biosynthesis; chorismate biosynthesis; chorismate from D-erythrose 4-phosphate and phosphoenolpyruvate: step 7/7. Functionally, catalyzes the anti-1,4-elimination of the C-3 phosphate and the C-6 proR hydrogen from 5-enolpyruvylshikimate-3-phosphate (EPSP) to yield chorismate, which is the branch point compound that serves as the starting substrate for the three terminal pathways of aromatic amino acid biosynthesis. This reaction introduces a second double bond into the aromatic ring system. In Bacillus cereus (strain ATCC 14579 / DSM 31 / CCUG 7414 / JCM 2152 / NBRC 15305 / NCIMB 9373 / NCTC 2599 / NRRL B-3711), this protein is Chorismate synthase 2.